A 308-amino-acid chain; its full sequence is Aspartate carbamoyltransferase catalytic subunit (308 aa).

The carbamoyl phosphate site is built by Arg55 and Thr56. Residue Lys83 participates in L-aspartate binding. 3 residues coordinate carbamoyl phosphate: Arg105, His133, and Gln136. 2 residues coordinate L-aspartate: Arg166 and Arg220. Residues Gly261 and Pro262 each contribute to the carbamoyl phosphate site.

Belongs to the aspartate/ornithine carbamoyltransferase superfamily. ATCase family. In terms of assembly, heterododecamer (2C3:3R2) of six catalytic PyrB chains organized as two trimers (C3), and six regulatory PyrI chains organized as three dimers (R2).

It catalyses the reaction carbamoyl phosphate + L-aspartate = N-carbamoyl-L-aspartate + phosphate + H(+). It participates in pyrimidine metabolism; UMP biosynthesis via de novo pathway; (S)-dihydroorotate from bicarbonate: step 2/3. In terms of biological role, catalyzes the condensation of carbamoyl phosphate and aspartate to form carbamoyl aspartate and inorganic phosphate, the committed step in the de novo pyrimidine nucleotide biosynthesis pathway. The protein is Aspartate carbamoyltransferase catalytic subunit of Chlorobium limicola (strain DSM 245 / NBRC 103803 / 6330).